Here is a 505-residue protein sequence, read N- to C-terminus: Deoxyguanosinetriphosphate triphosphohydrolase (505 aa).

The 208-residue stretch at 66 to 273 folds into the HD domain; that stretch reads RLTHSMEVQQ…MEAADDISYC (208 aa).

It belongs to the dGTPase family. Type 1 subfamily. As to quaternary structure, homotetramer. Requires Mg(2+) as cofactor.

It carries out the reaction dGTP + H2O = 2'-deoxyguanosine + triphosphate + H(+). In terms of biological role, dGTPase preferentially hydrolyzes dGTP over the other canonical NTPs. The chain is Deoxyguanosinetriphosphate triphosphohydrolase from Salmonella arizonae (strain ATCC BAA-731 / CDC346-86 / RSK2980).